Here is an 86-residue protein sequence, read N- to C-terminus: Small ribosomal subunit protein uS17 (86 aa).

This sequence belongs to the universal ribosomal protein uS17 family. In terms of assembly, part of the 30S ribosomal subunit.

Functionally, one of the primary rRNA binding proteins, it binds specifically to the 5'-end of 16S ribosomal RNA. The sequence is that of Small ribosomal subunit protein uS17 from Methylococcus capsulatus (strain ATCC 33009 / NCIMB 11132 / Bath).